Reading from the N-terminus, the 136-residue chain is Large ribosomal subunit protein uL16 (136 aa).

It belongs to the universal ribosomal protein uL16 family. Part of the 50S ribosomal subunit.

Functionally, binds 23S rRNA and is also seen to make contacts with the A and possibly P site tRNAs. This chain is Large ribosomal subunit protein uL16, found in Rickettsia akari (strain Hartford).